An 85-amino-acid chain; its full sequence is MATKKAGGSTRNGRDSEAKRLGVKRFGGESVLAGSIIVRQRGTKFHAGNNVGMGKDHTLFATADGKVKFEVKGEKNRKYVSIVAE.

The segment at methionine 1 to arginine 20 is disordered.

It belongs to the bacterial ribosomal protein bL27 family.

This Actinobacillus pleuropneumoniae serotype 5b (strain L20) protein is Large ribosomal subunit protein bL27.